The primary structure comprises 435 residues: Centrosomal protein of 55 kDa (435 aa).

Disordered regions lie at residues 1-63 (MAAK…TDKA), 213-239 (HKEAKSDDQSAQKVQQELEAERNKVSR), and 268-287 (ERRREREDRKSSVERDALLQ). Coiled-coil stretches lie at residues 18–140 (SSSS…KNKY) and 185–373 (EAYV…RESR). Composition is skewed to basic and acidic residues over residues 26–49 (AELEVEKLKRENQQMKKSLEDMKR) and 213–222 (HKEAKSDDQS).

It is found in the cytoplasm. The protein resides in the cytoskeleton. Its subcellular location is the microtubule organizing center. The protein localises to the centrosome. It localises to the centriole. It is found in the cleavage furrow. The protein resides in the midbody. Its subcellular location is the midbody ring. In terms of biological role, plays a role in mitotic exit and cytokinesis. Recruits PDCD6IP and TSG101 to midbody during cytokinesis. Required for successful completion of cytokinesis. Not required for microtubule nucleation. Plays a role in the development of the brain and kidney. This Danio rerio (Zebrafish) protein is Centrosomal protein of 55 kDa.